Here is a 345-residue protein sequence, read N- to C-terminus: Methylthioribose-1-phosphate isomerase (345 aa).

Substrate contacts are provided by residues 44 to 46, Arg87, and Gln194; that span reads RGA. Residue Asp235 is the Proton donor of the active site. Position 245-246 (245-246) interacts with substrate; the sequence is NK.

The protein belongs to the eIF-2B alpha/beta/delta subunits family. MtnA subfamily.

The catalysed reaction is 5-(methylsulfanyl)-alpha-D-ribose 1-phosphate = 5-(methylsulfanyl)-D-ribulose 1-phosphate. It functions in the pathway amino-acid biosynthesis; L-methionine biosynthesis via salvage pathway; L-methionine from S-methyl-5-thio-alpha-D-ribose 1-phosphate: step 1/6. Catalyzes the interconversion of methylthioribose-1-phosphate (MTR-1-P) into methylthioribulose-1-phosphate (MTRu-1-P). The polypeptide is Methylthioribose-1-phosphate isomerase (Heliobacterium modesticaldum (strain ATCC 51547 / Ice1)).